The primary structure comprises 215 residues: Probable transaldolase (215 aa).

Catalysis depends on Lys83, which acts as the Schiff-base intermediate with substrate.

It belongs to the transaldolase family. Type 3B subfamily.

Its subcellular location is the cytoplasm. It carries out the reaction D-sedoheptulose 7-phosphate + D-glyceraldehyde 3-phosphate = D-erythrose 4-phosphate + beta-D-fructose 6-phosphate. It functions in the pathway carbohydrate degradation; pentose phosphate pathway; D-glyceraldehyde 3-phosphate and beta-D-fructose 6-phosphate from D-ribose 5-phosphate and D-xylulose 5-phosphate (non-oxidative stage): step 2/3. Transaldolase is important for the balance of metabolites in the pentose-phosphate pathway. The protein is Probable transaldolase of Heliobacterium modesticaldum (strain ATCC 51547 / Ice1).